We begin with the raw amino-acid sequence, 187 residues long: Probable chorismate pyruvate-lyase (187 aa).

Arg80, Leu118, and Glu170 together coordinate substrate.

It belongs to the UbiC family.

The protein localises to the cytoplasm. The enzyme catalyses chorismate = 4-hydroxybenzoate + pyruvate. Its pathway is cofactor biosynthesis; ubiquinone biosynthesis. Its function is as follows. Removes the pyruvyl group from chorismate, with concomitant aromatization of the ring, to provide 4-hydroxybenzoate (4HB) for the ubiquinone pathway. The protein is Probable chorismate pyruvate-lyase of Pseudomonas fluorescens (strain ATCC BAA-477 / NRRL B-23932 / Pf-5).